Here is a 349-residue protein sequence, read N- to C-terminus: GDSL esterase/lipase At2g19050 (349 aa).

An N-terminal signal peptide occupies residues 1–23 (MAEAIFKALLLVIATTAFATTEA). Residue Ser38 is the Nucleophile of the active site. The N-linked (GlcNAc...) asparagine glycan is linked to Asn49. Catalysis depends on residues Asp316 and His319.

It belongs to the 'GDSL' lipolytic enzyme family.

Its subcellular location is the secreted. In Arabidopsis thaliana (Mouse-ear cress), this protein is GDSL esterase/lipase At2g19050.